Consider the following 2997-residue polypeptide: Chromodomain-helicase-DNA-binding protein 7 (2997 aa).

The tract at residues 86-144 (PNRMMSNTPGNGLASPHSQYHTPPVPQVPHGGSGGGQMGVYPGMQNERHGQSFVDSSSM) is disordered. Residues 88–106 (RMMSNTPGNGLASPHSQYH) show a composition bias toward polar residues. Arg148 is modified (omega-N-methylarginine). Disordered regions lie at residues 160–186 (YQQQQPQPQPPQPAPSGPPAQGHPQHM), 199–287 (SMQQ…AVRP), 375–419 (QMNT…GSAG), 498–816 (GQQH…KQKE), and 938–959 (REPETERVERPPADDWKKSESS). Residues 166–177 (QPQPPQPAPSGP) are compositionally biased toward pro residues. 2 stretches are compositionally biased toward polar residues: residues 199–224 (SMQQHGQPQQRMSQFSQGQEGLNQGN) and 238–255 (VPQQSPSMAPSLRHSVQQ). Arg286 is modified (asymmetric dimethylarginine). The segment covering 375–390 (QMNTQTMHPSQPQGTY) has biased composition (polar residues). Positions 498–510 (GQQHPGQQPSFQQ) are enriched in low complexity. Over residues 607–620 (VAEDPSKGFGKDDF) the composition is skewed to basic and acidic residues. The span at 627 to 636 (QELNRNSLDG) shows a compositional bias: polar residues. Residue Ser637 is modified to Phosphoserine. 2 stretches are compositionally biased toward basic and acidic residues: residues 650 to 682 (KKDPKEPKEPKEKKEPKEPKTPKAPKIPKEPKE) and 717 to 729 (GKTEGSENSDLDK). Phosphoserine is present on Ser725. Over residues 746–758 (QKRRSSRQVKRKR) the composition is skewed to basic residues. Residues 759–769 (YTEDLEFKISD) are compositionally biased toward basic and acidic residues. Residues 782–794 (SPSNTSQSEQQES) are compositionally biased toward polar residues. Chromo domains are found at residues 800-867 (PVVE…GQNK) and 882-947 (VEVD…RVER). Residues 980 to 1154 (LFNWYNMRNC…FSLLHFLEPS (175 aa)) form the Helicase ATP-binding domain. 993-1000 (DEMGLGKT) serves as a coordination point for ATP. The short motif at 1105-1108 (DEAH) is the DEAH box element. The Helicase C-terminal domain occupies 1294–1464 (LIDKLLPKLK…LSKKEIEDLL (171 aa)). 2 disordered regions span residues 1576 to 1600 (FSDLESDSEEKPCAKPRRPQDKSQG) and 1837 to 1863 (DMLADGGDGGEFDREDEDPEYKPTRTP). A phosphoserine mark is found at Ser1577 and Ser1581. The segment covering 1584 to 1596 (EEKPCAKPRRPQD) has biased composition (basic and acidic residues). Residues 1844–1855 (DGGEFDREDEDP) show a composition bias toward acidic residues. Ser1874 bears the Phosphoserine mark. Composition is skewed to basic and acidic residues over residues 2170–2189 (QAEGKVEEPENPAAKEKCEG) and 2198–2207 (GSGKESKQEC). The tract at residues 2170-2290 (QAEGKVEEPE…DETRDGFYME (121 aa)) is disordered. A phosphoserine mark is found at Ser2231, Ser2233, Ser2237, Ser2251, Ser2272, Ser2275, Ser2356, and Ser2395. Over residues 2237-2251 (SEEDEEEKLEDDDKS) the composition is skewed to acidic residues. Residues 2401–2431 (RRRRRKIEIEAERAAKRRNLMEMVAQLRESQ) are a coiled coil. Thr2472 carries the post-translational modification Phosphothreonine. Phosphoserine occurs at positions 2533 and 2535. Position 2551 is a phosphothreonine (Thr2551). Phosphoserine is present on residues Ser2559 and Ser2619. The span at 2823-2832 (ATGNTTTASS) shows a compositional bias: low complexity. Disordered stretches follow at residues 2823-2872 (ATGN…SANG) and 2935-2997 (EEKA…ENDE). Composition is skewed to basic and acidic residues over residues 2839 to 2849 (STSKGEEKGNE) and 2935 to 2951 (EEKAADKAEGGPFKDGE). Phosphoserine is present on residues Ser2956 and Ser2961. A compositionally biased stretch (acidic residues) spans 2970-2997 (LLEDEIAQGEELDSLDGGDEIENNENDE).

It belongs to the SNF2/RAD54 helicase family. In terms of assembly, may interact with CTCF. Interacts with CHD8. Interacts with FAM124B. Found in a complex composed of AGO2, CHD7 and ARB2A. Interacts with TLK2. Widely expressed in fetal and adult tissues.

The protein localises to the nucleus. Its subcellular location is the nucleolus. It catalyses the reaction ATP + H2O = ADP + phosphate + H(+). In terms of biological role, ATP-dependent chromatin-remodeling factor, slides nucleosomes along DNA; nucleosome sliding requires ATP. Probable transcription regulator. May be involved in the in 45S precursor rRNA production. This Homo sapiens (Human) protein is Chromodomain-helicase-DNA-binding protein 7 (CHD7).